A 790-amino-acid chain; its full sequence is Pentatricopeptide repeat-containing protein OTP51, chloroplastic (790 aa).

A chloroplast-targeting transit peptide spans 1 to 56 (MATTSPCAAPSPSLRCPLALSHPFASPPPPPALRLAGPKLLPGRLAVSPPPGIPAV). PPR repeat units follow at residues 182 to 216 (NFAL…GRVP), 217 to 254 (AEST…GGYK), 256 to 296 (RLSL…NLDV), 299 to 333 (DVYA…GFDE), 334 to 368 (GIDV…GSDL), 369 to 403 (PVQA…NIPP), 404 to 438 (NVAS…DMKH), 439 to 469 (LMPA…CIAR), 473 to 507 (NRIL…GMIG), and 509 to 543 (NTKS…KYDV). The tract at residues 762–790 (GSSIGSDGTQDTDTDSDDDMQMSDTERDE) is disordered. Acidic residues predominate over residues 771–790 (QDTDTDSDDDMQMSDTERDE).

This sequence belongs to the PPR family. P subfamily.

The protein localises to the plastid. The protein resides in the chloroplast. Promotes the splicing of group II introns in chloroplasts. Required for the splicing of intron 2 of plastid ycf3 transcripts, a factor required for the assembly of photosystem I (PSI). Involved in the splicing of atpF, ndhA, petB and rps16 chloroplastic transcripts. Required for the assembly of PSI. In Oryza sativa subsp. japonica (Rice), this protein is Pentatricopeptide repeat-containing protein OTP51, chloroplastic.